Here is a 426-residue protein sequence, read N- to C-terminus: Colanic acid biosynthesis protein WcaK (426 aa).

The protein belongs to the polysaccharide pyruvyl transferase family.

The protein operates within slime biogenesis; slime polysaccharide biosynthesis. The polypeptide is Colanic acid biosynthesis protein WcaK (wcaK) (Escherichia coli (strain K12)).